We begin with the raw amino-acid sequence, 428 residues long: MTVHVSNCAATAEDPVSREIRTESGQREVFCGLTGIVWLHRKIQDAFFLVVGSRTCAHLIQSAAGVMIFAEPRFGTAIMEEKDLAGLTDANIELDRIVTQLLTRRPDIKLLFLVGSCPSEVIKLDLSRAALRLSQRFSPGVRILNYSGSGIETTFTQGEDACLASLVPELPAAQDEKSSLLVVGSLADVVEDQFMRMFDALGIGPVQFFPPRKSTALPSVGPNTKILMAQPFLPDTVRALQERGAKRLAAPFPLGVEGTTGWLRAAADAFGVDPAHFDKVTGPNRARAERALAAYRTELADRRIFFFPDSQLEIPLARFLSRELSMKLVEVGTPYLHREHLAEELKLLPAGVAITEGQDVDLQLDRCRLARPDIVVCGLGLANPLEAEGITTKWSIELVFTPIQGYEQAADLAELFARPLVRRAKLVA.

The [4Fe-4S] cluster site is built by C31, C56, and C117.

The protein belongs to the BchN/ChlN family. In terms of assembly, protochlorophyllide reductase is composed of three subunits; BchL, BchN and BchB. Forms a heterotetramer of two BchB and two BchN subunits. The cofactor is [4Fe-4S] cluster.

It carries out the reaction chlorophyllide a + oxidized 2[4Fe-4S]-[ferredoxin] + 2 ADP + 2 phosphate = protochlorophyllide a + reduced 2[4Fe-4S]-[ferredoxin] + 2 ATP + 2 H2O. It participates in porphyrin-containing compound metabolism; bacteriochlorophyll biosynthesis (light-independent). Its function is as follows. Component of the dark-operative protochlorophyllide reductase (DPOR) that uses Mg-ATP and reduced ferredoxin to reduce ring D of protochlorophyllide (Pchlide) to form chlorophyllide a (Chlide). This reaction is light-independent. The NB-protein (BchN-BchB) is the catalytic component of the complex. This Rhodopseudomonas palustris (strain BisB5) protein is Light-independent protochlorophyllide reductase subunit N.